We begin with the raw amino-acid sequence, 121 residues long: Flagellar protein FliT (121 aa).

The tract at residues Met1 to Leu50 is required for homodimerization. A fliD binding region spans residues Met60–Val98.

This sequence belongs to the FliT family. As to quaternary structure, homodimer. Interacts with FliD and FlhC.

Its subcellular location is the cytoplasm. The protein resides in the cytosol. Its function is as follows. Dual-function protein that regulates the transcription of class 2 flagellar operons and that also acts as an export chaperone for the filament-capping protein FliD. As a transcriptional regulator, acts as an anti-FlhDC factor; it directly binds FlhC, thus inhibiting the binding of the FlhC/FlhD complex to class 2 promoters, resulting in decreased expression of class 2 flagellar operons. As a chaperone, effects FliD transition to the membrane by preventing its premature polymerization, and by directing it to the export apparatus. This is Flagellar protein FliT from Shigella flexneri serotype 5b (strain 8401).